The following is a 234-amino-acid chain: Putative B3 domain-containing protein At2g18810 (234 aa).

A disordered region spans residues 55 to 88 (CKNQDPEQNPNRVASSPSLCHVKSKRPQKGVSNK). Residues 60-72 (PEQNPNRVASSPS) show a composition bias toward polar residues. Positions 87 to 185 (NKPILDMDFL…MLFFALVLSD (99 aa)) form a DNA-binding region, TF-B3.

It is found in the nucleus. This chain is Putative B3 domain-containing protein At2g18810, found in Arabidopsis thaliana (Mouse-ear cress).